Reading from the N-terminus, the 872-residue chain is Potassium voltage-gated channel subfamily KQT member 3 (872 aa).

Residues 1–43 form a disordered region; it reads MGLKARRAAGAAGGGGDGGGGGGGAANPAGGDAAAAGDEERKV. Residues 1–120 are Cytoplasmic-facing; sequence MGLKARRAAG…IYDALERPRG (120 aa). The segment covering 11-25 has biased composition (gly residues); the sequence is AAGGGGDGGGGGGGA. A compositionally biased stretch (low complexity) spans 26–36; that stretch reads ANPAGGDAAAA. T81 carries the phosphothreonine modification. The helical transmembrane segment at 121-143 threads the bilayer; it reads WALLYHALVFLIVLGCLILAVLT. At 144 to 153 the chain is on the extracellular side; sequence TFKEYETVSG. Residues 154 to 175 traverse the membrane as a helical segment; that stretch reads DWLLLLETFAIFIFGAEFALRI. Residues 176–193 lie on the Cytoplasmic side of the membrane; that stretch reads WAAGCCCRYKGWRGRLKF. Residues 194–213 form a helical membrane-spanning segment; the sequence is ARKPLCMLDIFVLIASVPVV. Over 214–225 the chain is Extracellular; that stretch reads AVGNQGNVLATS. The helical; Voltage-sensor transmembrane segment at 226–244 threads the bilayer; the sequence is LRSLRFLQILRMLRMDRRG. R243 contacts a 1,2-diacyl-sn-glycero-3-phospho-(1D-myo-inositol-4,5-bisphosphate). Residues 245 to 256 lie on the Cytoplasmic side of the membrane; that stretch reads GTWKLLGSAICA. T246 carries the post-translational modification Phosphothreonine. Residues 257-282 traverse the membrane as a helical segment; sequence HSKELITAWYIGFLTLILSSFLVYLV. K259 contacts a 1,2-diacyl-sn-glycero-3-phospho-(1D-myo-inositol-4,5-bisphosphate). Over 283–302 the chain is Extracellular; sequence EKDVPEVDAQGEEMKEEFET. The pore-forming intramembrane region spans 303-315; sequence YADALWWGLITLA. The Selectivity filter signature appears at 316 to 321; it reads TIGYGD. Residues 316–326 are Extracellular-facing; it reads TIGYGDKTPKT. The helical transmembrane segment at 327-353 threads the bilayer; sequence WEGRLIAATFSLIGVSFFALPAGILGS. Residues 354 to 872 lie on the Cytoplasmic side of the membrane; the sequence is GLALKVQEQH…SVWTPSNKPI (519 aa). The tract at residues 356-537 is mediates interaction with calmodulin; that stretch reads ALKVQEQHRQ…RLYKKKFKET (182 aa). K366 contributes to the a 1,2-diacyl-sn-glycero-3-phospho-(1D-myo-inositol-4,5-bisphosphate) binding site. Disordered stretches follow at residues 575-611 and 764-872; these read GPPS…PSTS and ADLQ…NKPI. Polar residues-rich tracts occupy residues 587-600 and 843-872; these read KGSA…QSPR and DPFT…NKPI.

This sequence belongs to the potassium channel family. KQT (TC 1.A.1.15) subfamily. Kv7.3/KCNQ3 sub-subfamily. As to quaternary structure, heterotetramer with KCNQ2; forms heterotetrameric native M-channel responsible for the M-current. Interacts with calmodulin; the interaction is calcium-independent, constitutive and participates in the proper assembly of a functional M-channel. Heteromultimer with KCNQ5. May associate with KCNE2. Interacts with IQCJ-SCHIP1. Interacts (via the pore module) with SLC5A3/SMIT1; forms a coregulatory complex that alters ion selectivity, voltage dependence and gating kinetics of the channel. KCNQ2/KCNQ3 are ubiquitinated by NEDD4L. Ubiquitination leads to protein degradation. Degradation induced by NEDD4L is inhibited by USP36. As to expression, predominantly expressed in brain.

It is found in the cell membrane. It carries out the reaction K(+)(in) = K(+)(out). It catalyses the reaction Rb(+)(in) = Rb(+)(out). The enzyme catalyses Cs(+)(in) = Cs(+)(out). The catalysed reaction is Na(+)(in) = Na(+)(out). Its activity is regulated as follows. Phosphatidylinositol-4,5-bisphosphate (PIP2) potentiates the activation of KCNQ channels by enhancing the electro-mechanical coupling of the voltage-sensing domain (VSD) and the pore-forming domain (PD). In the closed state of the channel, PIP2 is anchored at the S2-S3 loop; upon channel activation, PIP2 interacts with the S4-S5 linker and is involved in channel gating. Calcium suppresses KCNQ2-KCNQ3 channel currents, with calcium-bound calmodulin inducing a change in channel configuration which leads to the reduction of channel affinity for PIP2 and subsequent current suppression. M-channel is activated by the anticonvulsant retigabine. Its function is as follows. Pore-forming subunit of the voltage-gated potassium (Kv) M-channel which is responsible for the M-current, a key controller of neuronal excitability. M-channel is composed of pore-forming subunits KCNQ2 and KCNQ3 assembled as heterotetramers. The native M-current has a slowly activating and deactivating potassium conductance which plays a critical role in determining the subthreshold electrical excitability of neurons as well as the responsiveness to synaptic inputs. M-channel is selectively permeable in vitro to other cations besides potassium, in decreasing order of affinity K(+) &gt; Rb(+) &gt; Cs(+) &gt; Na(+). M-channel association with SLC5A3/SMIT1 alters channel ion selectivity, increasing Na(+) and Cs(+) permeation relative to K(+). Suppressed by activation of M1 muscarinic acetylcholine receptors. KCNQ3 also associates with KCNQ5 to form a functional channel in vitro and may also contribute to the M-current in brain. This chain is Potassium voltage-gated channel subfamily KQT member 3, found in Homo sapiens (Human).